The following is a 513-amino-acid chain: Activin receptor type-2B (513 aa).

The N-terminal stretch at Met1 to Gly18 is a signal peptide. The Extracellular segment spans residues Ser19–Thr137. Intrachain disulfides connect Cys29–Cys59, Cys49–Cys77, Cys84–Cys103, Cys90–Cys102, and Cys104–Cys109. N-linked (GlcNAc...) asparagine glycosylation is found at Asn42 and Asn65. A helical transmembrane segment spans residues Val138–Trp158. The Cytoplasmic segment spans residues Met159–Ile513. A Protein kinase domain is found at Leu190 to Leu481. Residues Lys196–Val204 and Lys217 each bind ATP. Catalysis depends on Asp322, which acts as the Proton acceptor. Residues Asp492–Ile513 form an interaction with DYNLT1 region.

Belongs to the protein kinase superfamily. TKL Ser/Thr protein kinase family. TGFB receptor subfamily. Forms an activin receptor complex with activin type II receptors such as ACVR1B. Interacts with VPS39. Interacts with DYNLT1. Interacts with BMP3. Interacts with BMP2. Mg(2+) is required as a cofactor. The cofactor is Mn(2+). Post-translationally, phosphorylated. Constitutive phosphorylation is in part catalyzed by its own kinase activity.

The protein resides in the cell membrane. It carries out the reaction L-threonyl-[receptor-protein] + ATP = O-phospho-L-threonyl-[receptor-protein] + ADP + H(+). The catalysed reaction is L-seryl-[receptor-protein] + ATP = O-phospho-L-seryl-[receptor-protein] + ADP + H(+). Transmembrane serine/threonine kinase activin type-2 receptor forming an activin receptor complex with activin type-1 serine/threonine kinase receptors (ACVR1, ACVR1B or ACVR1c). Transduces the activin signal from the cell surface to the cytoplasm and is thus regulating many physiological and pathological processes including neuronal differentiation and neuronal survival, hair follicle development and cycling, FSH production by the pituitary gland, wound healing, extracellular matrix production, immunosuppression and carcinogenesis. Activin is also thought to have a paracrine or autocrine role in follicular development in the ovary. Within the receptor complex, the type-2 receptors act as a primary activin receptors (binds activin-A/INHBA, activin-B/INHBB as well as inhibin-A/INHA-INHBA). The type-1 receptors like ACVR1B act as downstream transducers of activin signals. Activin binds to type-2 receptor at the plasma membrane and activates its serine-threonine kinase. The activated receptor type-2 then phosphorylates and activates the type-1 receptor. Once activated, the type-1 receptor binds and phosphorylates the SMAD proteins SMAD2 and SMAD3, on serine residues of the C-terminal tail. Soon after their association with the activin receptor and subsequent phosphorylation, SMAD2 and SMAD3 are released into the cytoplasm where they interact with the common partner SMAD4. This SMAD complex translocates into the nucleus where it mediates activin-induced transcription. Inhibitory SMAD7, which is recruited to ACVR1B through FKBP1A, can prevent the association of SMAD2 and SMAD3 with the activin receptor complex, thereby blocking the activin signal. Activin signal transduction is also antagonized by the binding to the receptor of inhibin-B via the IGSF1 inhibin coreceptor. The polypeptide is Activin receptor type-2B (Acvr2b) (Rattus norvegicus (Rat)).